The primary structure comprises 192 residues: Protein GrpE (192 aa).

Belongs to the GrpE family. Homodimer.

The protein resides in the cytoplasm. Functionally, participates actively in the response to hyperosmotic and heat shock by preventing the aggregation of stress-denatured proteins, in association with DnaK and GrpE. It is the nucleotide exchange factor for DnaK and may function as a thermosensor. Unfolded proteins bind initially to DnaJ; upon interaction with the DnaJ-bound protein, DnaK hydrolyzes its bound ATP, resulting in the formation of a stable complex. GrpE releases ADP from DnaK; ATP binding to DnaK triggers the release of the substrate protein, thus completing the reaction cycle. Several rounds of ATP-dependent interactions between DnaJ, DnaK and GrpE are required for fully efficient folding. The chain is Protein GrpE from Neisseria gonorrhoeae (strain ATCC 700825 / FA 1090).